The chain runs to 154 residues: Transcriptional repressor NrdR (154 aa).

Residues 3–34 (CPFCGANDTKVIDSRLVAEGEQVRRRRECLAC) fold into a zinc finger. Residues 49–139 (PRLIKTDGSR…VYRRFQDLNE (91 aa)) form the ATP-cone domain.

It belongs to the NrdR family. Zn(2+) is required as a cofactor.

Its function is as follows. Negatively regulates transcription of bacterial ribonucleotide reductase nrd genes and operons by binding to NrdR-boxes. This Pseudomonas fluorescens (strain Pf0-1) protein is Transcriptional repressor NrdR.